The sequence spans 121 residues: Small ribosomal subunit protein uS13 (121 aa).

Residues 88–121 (GMRHRRGLPTRGQNTKNNARTRKGPAKSIAGKKK) form a disordered region. Residues 106-121 (ARTRKGPAKSIAGKKK) are compositionally biased toward basic residues.

This sequence belongs to the universal ribosomal protein uS13 family. In terms of assembly, part of the 30S ribosomal subunit. Forms a loose heterodimer with protein S19. Forms two bridges to the 50S subunit in the 70S ribosome.

Its function is as follows. Located at the top of the head of the 30S subunit, it contacts several helices of the 16S rRNA. In the 70S ribosome it contacts the 23S rRNA (bridge B1a) and protein L5 of the 50S subunit (bridge B1b), connecting the 2 subunits; these bridges are implicated in subunit movement. Contacts the tRNAs in the A and P-sites. This Lactococcus lactis subsp. cremoris (strain MG1363) protein is Small ribosomal subunit protein uS13.